Here is a 585-residue protein sequence, read N- to C-terminus: UvrABC system protein C (585 aa).

A GIY-YIG domain is found at alanine 15–valine 90. The UVR domain occupies glycine 198–phenylalanine 233.

It belongs to the UvrC family. As to quaternary structure, interacts with UvrB in an incision complex.

Its subcellular location is the cytoplasm. Its function is as follows. The UvrABC repair system catalyzes the recognition and processing of DNA lesions. UvrC both incises the 5' and 3' sides of the lesion. The N-terminal half is responsible for the 3' incision and the C-terminal half is responsible for the 5' incision. The chain is UvrABC system protein C from Haloquadratum walsbyi (strain DSM 16790 / HBSQ001).